We begin with the raw amino-acid sequence, 186 residues long: Putative glutathione-dependent formaldehyde-activating enzyme (186 aa).

The region spanning 20 to 166 is the CENP-V/GFA domain; that stretch reads FSGGKLRCKC…FKSIGLETYD (147 aa). Residues cysteine 27, cysteine 29, cysteine 48, cysteine 50, cysteine 53, cysteine 95, and cysteine 98 each contribute to the Zn(2+) site.

Belongs to the Gfa family. The cofactor is Zn(2+).

It carries out the reaction S-(hydroxymethyl)glutathione = glutathione + formaldehyde. Its pathway is one-carbon metabolism; formaldehyde degradation; formate from formaldehyde (glutathione route): step 1/3. Its function is as follows. Catalyzes the condensation of formaldehyde and glutathione to S-hydroxymethylglutathione. The sequence is that of Putative glutathione-dependent formaldehyde-activating enzyme from Fusarium vanettenii (strain ATCC MYA-4622 / CBS 123669 / FGSC 9596 / NRRL 45880 / 77-13-4) (Fusarium solani subsp. pisi).